The primary structure comprises 310 residues: M1-specific T cell receptor beta chain (310 aa).

An N-terminal signal peptide occupies residues 1-21 (MSNQVLCCVVLCLLGANTVDG). The t cell receptor beta variable 19 stretch occupies residues 22–114 (GITQSPKYLF…TAFYLCASSI (93 aa)). The Ig-like V-type domain maps to 34–131 (EGQNVTLSCE…FGPGTRLTVT (98 aa)). A glycan (N-linked (GlcNAc...) asparagine) is linked at N37. An intrachain disulfide couples C42 to C110. The tract at residues 46–50 (LNHDA) is CDR1. Residue D49 participates in a peptide antigen binding. A CDR2 region spans residues 68 to 73 (SQIVND). Positions 110-122 (CASSIRSSYEQYF) are CDR3. The tract at residues 117 to 131 (SYEQYFGPGTRLTVT) is t cell receptor beta joining 2-7. The segment at 133–310 (DLKNVFPPKV…AMVKRKDSRG (178 aa)) is t cell receptor beta constant 2. The 110-residue stretch at 140-249 (PKVAVFEPSE…WTQDRAKPVT (110 aa)) folds into the Ig-like C1-type domain. C162 and C227 form a disulfide bridge. Residue N201 is glycosylated (N-linked (GlcNAc...) asparagine). The connecting peptide stretch occupies residues 262–276 (CGFTSESYQQGVLSA). Residues 277–299 (TILYEILLGKATLYAVLVSALVL) traverse the membrane as a helical segment. Over 300-310 (MAMVKRKDSRG) the chain is Cytoplasmic.

Disulfide-linked heterodimer with TRAV27*01J42*01C*01 alpha chain. The TR primarily interacts via its CDR3-beta domain with M/matrix protein 1-derived peptide (GILGFVFTL) displayed by HLA-A*02.01 in a 'peg-notch' recognition mode. The alpha-beta TR associates with the transmembrane signaling CD3 coreceptor proteins to form the TR-CD3 (TCR). The assembly of alpha-beta TR heterodimers with CD3 occurs in the endoplasmic reticulum where a single alpha-beta TR heterodimer associates with one CD3D-CD3E heterodimer, one CD3G-CD3E heterodimer and one CD247 homodimer forming a stable octameric structure. CD3D-CD3E and CD3G-CD3E heterodimers preferentially associate with TR alpha and TR beta chains (via TM domain), respectively. The association of the CD247 homodimer is the last step of TCR assembly in the endoplasmic reticulum and is required for transport to the cell surface. Expressed in M/matrix protein 1-specific effector memory CD8-positive T cells readily detectable in the peripheral blood, secondary lymphoid organs and lung (primary site of infection) of IAV infected individuals.

The protein resides in the cell membrane. Its function is as follows. The beta chain of TRAV27*01J42*01C*01/TRBV19*01J2S7*01C*02 alpha-beta T cell receptor (TR) clonotype that is specific for HLA-A*02:01-restricted M/matrix protein 1 immunodominant epitope GILGFVFTL of influenza A virus (IAV). Classified as a public TCR clonotype, it is preferentially selected in effector memory CD8-positive T cells among multiple HLA-A*02:01 carriers/individuals and confers long-lived immunity against IAV infection. Can cross-recognize sporadically emerging IAV variants by molecular mimicry, inducing immunity toward different influenza strains. Antigen recognition initiates TR-CD3 clustering on the cell surface and intracellular activation of LCK that phosphorylates the ITAM motifs of CD3G, CD3D, CD3E and CD247 enabling the recruitment of ZAP70. In turn, ZAP70 phosphorylates LAT, which recruits numerous signaling molecules to form the LAT signalosome. The LAT signalosome propagates signal branching to three major signaling pathways, the calcium, the mitogen-activated protein kinase (MAPK) kinase and the nuclear factor NF-kappa-B (NF-kB) pathways, leading to the mobilization of transcription factors that are critical for gene expression and essential for T cell differentiation into effector/memory T cells. The sequence is that of M1-specific T cell receptor beta chain from Homo sapiens (Human).